The following is a 387-amino-acid chain: Bifunctional chorismate mutase/prephenate dehydratase (387 aa).

Positions 1-92 constitute a Chorismate mutase domain; that stretch reads MNPDNPLLAL…DSVLTQQALL (92 aa). The substrate site is built by arginine 11, arginine 28, lysine 39, aspartate 48, glutamate 52, serine 84, and glutamine 88. The region spanning 105-285 is the Prephenate dehydratase domain; that stretch reads RIAFLGPKGS…NHTRFIVLAR (181 aa). Residues 299–376 enclose the ACT domain; the sequence is TLIMATGQQA…RSLKVLGCYP (78 aa).

Its subcellular location is the cytoplasm. It catalyses the reaction chorismate = prephenate. It carries out the reaction prephenate + H(+) = 3-phenylpyruvate + CO2 + H2O. The protein operates within amino-acid biosynthesis; L-phenylalanine biosynthesis; phenylpyruvate from prephenate: step 1/1. It participates in metabolic intermediate biosynthesis; prephenate biosynthesis; prephenate from chorismate: step 1/1. Catalyzes the Claisen rearrangement of chorismate to prephenate and the decarboxylation/dehydration of prephenate to phenylpyruvate. The chain is Bifunctional chorismate mutase/prephenate dehydratase (pheA) from Enterobacter agglomerans (Erwinia herbicola).